A 245-amino-acid chain; its full sequence is 5'-nucleotidase SurE (245 aa).

4 residues coordinate a divalent metal cation: Asp8, Asp9, Ser39, and Asn97.

It belongs to the SurE nucleotidase family. The cofactor is a divalent metal cation.

It localises to the cytoplasm. It carries out the reaction a ribonucleoside 5'-phosphate + H2O = a ribonucleoside + phosphate. Its function is as follows. Nucleotidase that shows phosphatase activity on nucleoside 5'-monophosphates. This is 5'-nucleotidase SurE from Clostridium kluyveri (strain NBRC 12016).